Consider the following 189-residue polypeptide: uncharacterized protein (189 aa).

The next 5 membrane-spanning stretches (helical) occupy residues 4–21, 34–56, 79–101, 122–144, and 148–170; these read AIST…FLFR, AFYP…PLIL, LLVI…LIYS, RILS…VLLN, and ILHV…NLLV.

It is found in the cell membrane. This is an uncharacterized protein from Archaeoglobus fulgidus (strain ATCC 49558 / DSM 4304 / JCM 9628 / NBRC 100126 / VC-16).